We begin with the raw amino-acid sequence, 464 residues long: ATP synthase subunit beta (464 aa).

Position 150-157 (150-157) interacts with ATP; it reads GGAGVGKT.

It belongs to the ATPase alpha/beta chains family. As to quaternary structure, F-type ATPases have 2 components, CF(1) - the catalytic core - and CF(0) - the membrane proton channel. CF(1) has five subunits: alpha(3), beta(3), gamma(1), delta(1), epsilon(1). CF(0) has three main subunits: a(1), b(2) and c(9-12). The alpha and beta chains form an alternating ring which encloses part of the gamma chain. CF(1) is attached to CF(0) by a central stalk formed by the gamma and epsilon chains, while a peripheral stalk is formed by the delta and b chains.

It is found in the cell membrane. The catalysed reaction is ATP + H2O + 4 H(+)(in) = ADP + phosphate + 5 H(+)(out). Produces ATP from ADP in the presence of a proton gradient across the membrane. The catalytic sites are hosted primarily by the beta subunits. This chain is ATP synthase subunit beta, found in Dehalococcoides mccartyi (strain ATCC BAA-2266 / KCTC 15142 / 195) (Dehalococcoides ethenogenes (strain 195)).